Reading from the N-terminus, the 160-residue chain is Ribosome maturation factor RimP (160 aa).

Belongs to the RimP family.

The protein resides in the cytoplasm. Required for maturation of 30S ribosomal subunits. The sequence is that of Ribosome maturation factor RimP from Orientia tsutsugamushi (strain Ikeda) (Rickettsia tsutsugamushi).